Reading from the N-terminus, the 356-residue chain is S-adenosylmethionine:tRNA ribosyltransferase-isomerase (356 aa).

Belongs to the QueA family. Monomer.

Its subcellular location is the cytoplasm. The enzyme catalyses 7-aminomethyl-7-carbaguanosine(34) in tRNA + S-adenosyl-L-methionine = epoxyqueuosine(34) in tRNA + adenine + L-methionine + 2 H(+). The protein operates within tRNA modification; tRNA-queuosine biosynthesis. Its function is as follows. Transfers and isomerizes the ribose moiety from AdoMet to the 7-aminomethyl group of 7-deazaguanine (preQ1-tRNA) to give epoxyqueuosine (oQ-tRNA). The sequence is that of S-adenosylmethionine:tRNA ribosyltransferase-isomerase from Escherichia coli O8 (strain IAI1).